A 120-amino-acid polypeptide reads, in one-letter code: Aspartate 1-decarboxylase (120 aa).

Residue Ser-25 is the Schiff-base intermediate with substrate; via pyruvic acid of the active site. Ser-25 bears the Pyruvic acid (Ser) mark. Substrate is bound at residue Thr-57. Tyr-58 acts as the Proton donor in catalysis. Residue 73–75 (GAA) coordinates substrate.

This sequence belongs to the PanD family. Heterooctamer of four alpha and four beta subunits. Pyruvate serves as cofactor. In terms of processing, is synthesized initially as an inactive proenzyme, which is activated by self-cleavage at a specific serine bond to produce a beta-subunit with a hydroxyl group at its C-terminus and an alpha-subunit with a pyruvoyl group at its N-terminus.

Its subcellular location is the cytoplasm. It catalyses the reaction L-aspartate + H(+) = beta-alanine + CO2. The protein operates within cofactor biosynthesis; (R)-pantothenate biosynthesis; beta-alanine from L-aspartate: step 1/1. In terms of biological role, catalyzes the pyruvoyl-dependent decarboxylation of aspartate to produce beta-alanine. The protein is Aspartate 1-decarboxylase of Deinococcus radiodurans (strain ATCC 13939 / DSM 20539 / JCM 16871 / CCUG 27074 / LMG 4051 / NBRC 15346 / NCIMB 9279 / VKM B-1422 / R1).